The chain runs to 131 residues: Profilin-1 (131 aa).

This sequence belongs to the profilin family. In terms of assembly, occurs in many kinds of cells as a complex with monomeric actin in a 1:1 ratio.

The protein localises to the cytoplasm. The protein resides in the cytoskeleton. In terms of biological role, binds to actin and affects the structure of the cytoskeleton. At high concentrations, profilin prevents the polymerization of actin, whereas it enhances it at low concentrations. By binding to PIP2, it inhibits the formation of IP3 and DG. The sequence is that of Profilin-1 (PRO1) from Ricinus communis (Castor bean).